Here is a 225-residue protein sequence, read N- to C-terminus: Small ribosomal subunit protein uS2 (225 aa).

Basic and acidic residues predominate over residues 1–14 (MAEAKPAPEKEAAA). The tract at residues 1-33 (MAEAKPAPEKEAAAKTESVPVETEGEGPSVKEG) is disordered.

This sequence belongs to the universal ribosomal protein uS2 family.

The sequence is that of Small ribosomal subunit protein uS2 from Methanosarcina barkeri (strain Fusaro / DSM 804).